Consider the following 274-residue polypeptide: ATP synthase subunit a (274 aa).

Helical transmembrane passes span 40–60 (FWVC…VILI), 110–130 (IFVW…LVPF), 149–169 (DVNI…FYSI), 224–244 (IFIL…SVPW), and 245–265 (AIFH…LTIV).

It belongs to the ATPase A chain family. As to quaternary structure, F-type ATPases have 2 components, CF(1) - the catalytic core - and CF(0) - the membrane proton channel. CF(1) has five subunits: alpha(3), beta(3), gamma(1), delta(1), epsilon(1). CF(0) has three main subunits: a(1), b(2) and c(9-12). The alpha and beta chains form an alternating ring which encloses part of the gamma chain. CF(1) is attached to CF(0) by a central stalk formed by the gamma and epsilon chains, while a peripheral stalk is formed by the delta and b chains.

It is found in the cell membrane. Functionally, key component of the proton channel; it plays a direct role in the translocation of protons across the membrane. This Buchnera aphidicola subsp. Baizongia pistaciae (strain Bp) protein is ATP synthase subunit a.